The chain runs to 213 residues: MMNEAALANMIPYDTIGLYEQPKPRFIFKMPRVVPDQKSKFESDELFRRLSRESEVRYTGYRERSIEERQVRFMNGCREGHTEASFVASGTNLQLVFNANQNPYLHDKECDFDKEHGKVHIKSYFIMNGVCVRFRGWIDLERLDGVGCLEYDERRAMHEDAILRDQIDRYNQRLREFEDTKRAYRDNRQDEMEAVRRGVASGGIGVGASMWRR.

Belongs to the CBF-beta family.

It is found in the nucleus. Its function is as follows. Regulates the DNA-binding properties of Runt. This is Protein big brother (Bgb) from Drosophila melanogaster (Fruit fly).